The following is a 493-amino-acid chain: MRPLCVTCWWLGLLAAMGAVAGQEDGFEGTEEGSPREFIYLNRYKRAGESQDKCTYTFIVPQQRVTGAICVNSKEPEVLLENRVHKQELELLNNELLKQKRQIETLQQLVEVDGGIVSEVKLLRKESRNMNSRVTQLYMQLLHEIIRKRDNALELSQLENRILNQTADMLQLASKYKDLEHKYQHLATLAHNQSEIIAQLEEHCQRVPSARPVPQPPPAAPPRVYQPPTYNRIINQISTNEIQSDQNLKVLPPPLPTMPTLTSLPSSTDKPSGPWRDCLQALEDGHDTSSIYLVKPENTNRLMQVWCDQRHDPGGWTVIQRRLDGSVNFFRNWETYKQGFGNIDGEYWLGLENIYWLTNQGNYKLLVTMEDWSGRKVFAEYASFRLEPESEYYKLRLGRYHGNAGDSFTWHNGKQFTTLDRDHDVYTGNCAHYQKGGWWYNACAHSNLNGVWYRGGHYRSRYQDGVYWAEFRGGSYSLKKVVMMIRPNPNTFH.

The N-terminal stretch at 1-22 (MRPLCVTCWWLGLLAAMGAVAG) is a signal peptide. 2 coiled-coil regions span residues 76-115 (PEVL…VDGG) and 152-206 (ALEL…HCQR). N-linked (GlcNAc...) asparagine glycans are attached at residues asparagine 164 and asparagine 192. In terms of domain architecture, Fibrinogen C-terminal spans 269-489 (DKPSGPWRDC…KVVMMIRPNP (221 aa)). 2 disulfides stabilise this stretch: cysteine 278–cysteine 307 and cysteine 430–cysteine 443.

In terms of processing, N-glycosylated. Widely expressed in heart, small intestine, spleen and stomach. Also found in lower levels in colon, ovary, adrenal gland, skeletal muscle and in prostate.

It is found in the secreted. Functionally, induces sprouting in endothelial cells through an autocrine and paracrine action. In Homo sapiens (Human), this protein is Angiopoietin-related protein 2 (ANGPTL2).